The primary structure comprises 257 residues: Putative hydro-lyase Bamb_5282 (257 aa).

It belongs to the D-glutamate cyclase family.

This chain is Putative hydro-lyase Bamb_5282, found in Burkholderia ambifaria (strain ATCC BAA-244 / DSM 16087 / CCUG 44356 / LMG 19182 / AMMD) (Burkholderia cepacia (strain AMMD)).